The sequence spans 239 residues: Probable transcriptional regulatory protein BC_0539 (239 aa).

The protein belongs to the TACO1 family. YeeN subfamily.

The protein localises to the cytoplasm. This is Probable transcriptional regulatory protein BC_0539 from Bacillus cereus (strain ATCC 14579 / DSM 31 / CCUG 7414 / JCM 2152 / NBRC 15305 / NCIMB 9373 / NCTC 2599 / NRRL B-3711).